The primary structure comprises 207 residues: Large ribosomal subunit protein uL4 (207 aa).

Positions 48–70 (KAQKTRSEVSGGGAKPWRQKGTG) are disordered.

It belongs to the universal ribosomal protein uL4 family. As to quaternary structure, part of the 50S ribosomal subunit.

In terms of biological role, one of the primary rRNA binding proteins, this protein initially binds near the 5'-end of the 23S rRNA. It is important during the early stages of 50S assembly. It makes multiple contacts with different domains of the 23S rRNA in the assembled 50S subunit and ribosome. Functionally, forms part of the polypeptide exit tunnel. The protein is Large ribosomal subunit protein uL4 of Francisella tularensis subsp. holarctica (strain FTNF002-00 / FTA).